The following is a 105-amino-acid chain: Serine protease inhibitor Kazal-type 6 (105 aa).

The signal sequence occupies residues M1 to S23. At Q24 the chain carries Pyrrolidone carboxylic acid. Residues R49–C105 enclose the Kazal-like domain. Cystine bridges form between C55/C87, C65/C84, and C73/C105.

It is found in the secreted. Serine protease inhibitor selective for kallikreins. Efficiently inhibits KLK4, KLK5, KLK6, KLK7, KLK12, KLK13 and KLK14. Doesn't inhibit KLK8. This chain is Serine protease inhibitor Kazal-type 6 (Spink6), found in Rattus norvegicus (Rat).